The chain runs to 325 residues: Ribosomal RNA small subunit methyltransferase H (325 aa).

Residues 38 to 40, Asp55, Phe82, Asp103, and Gln110 each bind S-adenosyl-L-methionine; that span reads GGY. 2 disordered regions span residues 256–275 and 281–307; these read SGGD…AARA and PARK…RSAV.

The protein belongs to the methyltransferase superfamily. RsmH family.

It localises to the cytoplasm. It carries out the reaction cytidine(1402) in 16S rRNA + S-adenosyl-L-methionine = N(4)-methylcytidine(1402) in 16S rRNA + S-adenosyl-L-homocysteine + H(+). Functionally, specifically methylates the N4 position of cytidine in position 1402 (C1402) of 16S rRNA. This is Ribosomal RNA small subunit methyltransferase H from Sphingopyxis alaskensis (strain DSM 13593 / LMG 18877 / RB2256) (Sphingomonas alaskensis).